The chain runs to 200 residues: 3-isopropylmalate dehydratase small subunit (200 aa).

This sequence belongs to the LeuD family. LeuD type 1 subfamily. In terms of assembly, heterodimer of LeuC and LeuD.

It carries out the reaction (2R,3S)-3-isopropylmalate = (2S)-2-isopropylmalate. The protein operates within amino-acid biosynthesis; L-leucine biosynthesis; L-leucine from 3-methyl-2-oxobutanoate: step 2/4. In terms of biological role, catalyzes the isomerization between 2-isopropylmalate and 3-isopropylmalate, via the formation of 2-isopropylmaleate. The chain is 3-isopropylmalate dehydratase small subunit from Saccharopolyspora erythraea (strain ATCC 11635 / DSM 40517 / JCM 4748 / NBRC 13426 / NCIMB 8594 / NRRL 2338).